The primary structure comprises 124 residues: Small ribosomal subunit protein uS13 (124 aa).

Residues 95-124 (GLPVRGQRTKTNARTRKGPKRTIAGKKKAK) are disordered.

Belongs to the universal ribosomal protein uS13 family. As to quaternary structure, part of the 30S ribosomal subunit. Forms a loose heterodimer with protein S19. Forms two bridges to the 50S subunit in the 70S ribosome.

Its function is as follows. Located at the top of the head of the 30S subunit, it contacts several helices of the 16S rRNA. In the 70S ribosome it contacts the 23S rRNA (bridge B1a) and protein L5 of the 50S subunit (bridge B1b), connecting the 2 subunits; these bridges are implicated in subunit movement. Contacts the tRNAs in the A and P-sites. The sequence is that of Small ribosomal subunit protein uS13 from Rhodococcus erythropolis (strain PR4 / NBRC 100887).